The following is an 866-amino-acid chain: Protein mono-ADP-ribosyltransferase PARP9 (866 aa).

Ser42 is modified (phosphoserine). Macro domains lie at Gln109–Leu298 and Ala313–Ser492. The region spanning Thr635 to Ser853 is the PARP catalytic domain.

It belongs to the ARTD/PARP family. In terms of assembly, forms a stable complex with E3 ligase DTX3L; the interaction is required for PARP9 mediated ADP-ribosylation of ubiquitin. Interacts (via PARP catalytic domain) with DTX3L (via N-terminus). Forms a complex with STAT1 and DTX3L independently of IFNB1 or IFNG-mediated STAT1 'Tyr-701' phosphorylation. Forms a complex with STAT1, DTX3L and histone H2B H2BC9/H2BJ; the interaction is likely to induce H2BC9/H2BJ ubiquitination. Interacts (via N-terminus) with STAT1. Interacts with PARP14 in IFNG-stimulated macrophages; the interaction prevents PARP14-mediated STAT1 and STAT6 ADP-riboslylation. Interacts with PARP1 (when poly-ADP-ribosylated). In terms of processing, ADP-ribosylated by PARP14. As to expression, highly expressed in the thymus and intestine. Expressed in macrophages.

Its subcellular location is the cytoplasm. It localises to the cytosol. The protein localises to the nucleus. The enzyme catalyses [protein]-C-terminal glycine + NAD(+) = [protein]-C-terminal O-(ADP-D-ribosyl)-glycine + nicotinamide. With respect to regulation, binding to poly(ADP-ribose) does not affect its activity. Its function is as follows. ADP-ribosyltransferase which, in association with E3 ligase DTX3L, plays a role in DNA damage repair and in immune responses including interferon-mediated antiviral defenses. Within the complex, enhances DTX3L E3 ligase activity which is further enhanced by PARP9 binding to poly(ADP-ribose). In addition, positively regulates DTXL3 protein levels. In association with DTX3L and in presence of E1 and E2 enzymes, mediates NAD(+)-dependent mono-ADP-ribosylation of ubiquitin which prevents ubiquitin conjugation to substrates such as histones. During DNA repair, PARP1 recruits PARP9/BAL1-DTX3L complex to DNA damage sites via PARP9 binding to ribosylated PARP1. Subsequent PARP1-dependent PARP9/BAL1-DTX3L-mediated ubiquitination promotes the rapid and specific recruitment of 53BP1/TP53BP1, UIMC1/RAP80, and BRCA1 to DNA damage sites. In response to DNA damage, PARP9-DTX3L complex is required for efficient non-homologous end joining (NHEJ) but the complex function is restrained by PARP9 activity. Dispensable for B-cell receptor (BCR) assembly through V(D)J recombination and class switch recombination (CSR). In macrophages, positively regulates pro-inflammatory cytokines production in response to IFNG stimulation by suppressing PARP14-mediated STAT1 ADP-ribosylation and thus promoting STAT1 phosphorylation. Also suppresses PARP14-mediated STAT6 ADP-ribosylation. The protein is Protein mono-ADP-ribosyltransferase PARP9 (Parp9) of Mus musculus (Mouse).